Here is a 200-residue protein sequence, read N- to C-terminus: Troponin I-like protein (200 aa).

Disordered stretches follow at residues methionine 1–arginine 20 and glutamate 181–glutamate 200. Residues glycine 2–glutamate 116 adopt a coiled-coil conformation.

This sequence belongs to the troponin I family. Expressed in salivary gland, gut, muscle and cuticle (at protein level).

Its function is as follows. Inhibits endothelial cell proliferation and angiogenesis in a vertebrate host. Probably required for efficient blood feeding on vertebrate hosts. The chain is Troponin I-like protein from Haemaphysalis longicornis (Bush tick).